The chain runs to 189 residues: Ion-translocating oxidoreductase complex subunit B (189 aa).

The segment at 1-26 is hydrophobic; that stretch reads MSAVMIAVVLLGLLALVFGAILGFAA. A 4Fe-4S domain is found at 32–90; that stretch reads EGDPLVDQVESLLPQTQCGQCGYPGCRPYAEAIAGGDQINKCPPGGTATMEKIAELMGV. Residues cysteine 49, cysteine 52, cysteine 57, cysteine 73, cysteine 114, cysteine 117, cysteine 120, cysteine 124, cysteine 144, cysteine 147, cysteine 150, and cysteine 154 each coordinate [4Fe-4S] cluster. 4Fe-4S ferredoxin-type domains lie at 105–134 and 136–164; these read KVAY…GAGK and MHTV…MLPV.

It belongs to the 4Fe4S bacterial-type ferredoxin family. RnfB subfamily. As to quaternary structure, the complex is composed of six subunits: RnfA, RnfB, RnfC, RnfD, RnfE and RnfG. Requires [4Fe-4S] cluster as cofactor.

Its subcellular location is the cell inner membrane. Part of a membrane-bound complex that couples electron transfer with translocation of ions across the membrane. This chain is Ion-translocating oxidoreductase complex subunit B, found in Shewanella amazonensis (strain ATCC BAA-1098 / SB2B).